We begin with the raw amino-acid sequence, 437 residues long: Phosphoglucosamine mutase (437 aa).

Ser-101 acts as the Phosphoserine intermediate in catalysis. Mg(2+) contacts are provided by Ser-101, Asp-234, Asp-236, and Asp-238. The residue at position 101 (Ser-101) is a Phosphoserine.

This sequence belongs to the phosphohexose mutase family. The cofactor is Mg(2+). Activated by phosphorylation.

The catalysed reaction is alpha-D-glucosamine 1-phosphate = D-glucosamine 6-phosphate. Catalyzes the conversion of glucosamine-6-phosphate to glucosamine-1-phosphate. The polypeptide is Phosphoglucosamine mutase (Thermus thermophilus (strain ATCC 27634 / DSM 579 / HB8)).